We begin with the raw amino-acid sequence, 35 residues long: Phospholipase A2 bitanarin (35 aa).

The protein belongs to the phospholipase A2 family. Group II subfamily. As to quaternary structure, monomer. The cofactor is Ca(2+). Contains 14 disulfide bonds. Expressed by the venom gland.

It is found in the secreted. The enzyme catalyses a 1,2-diacyl-sn-glycero-3-phosphocholine + H2O = a 1-acyl-sn-glycero-3-phosphocholine + a fatty acid + H(+). Snake venom phospholipase A2 (PLA2) that is the first competitive blocker of nicotinic acetylcholine receptors (nAChRs). Competes with alpha-bungarotoxin for binding to nAChRs and acetylcholine binding proteins (AChBPs) and blocks acetylcholine-elicited current. PLA2 catalyzes the calcium-dependent hydrolysis of the 2-acyl groups in 3-sn-phosphoglycerides. The polypeptide is Phospholipase A2 bitanarin (Bitis arietans (African puff adder)).